We begin with the raw amino-acid sequence, 455 residues long: Exodeoxyribonuclease 7 large subunit (455 aa).

It belongs to the XseA family. Heterooligomer composed of large and small subunits.

It is found in the cytoplasm. The enzyme catalyses Exonucleolytic cleavage in either 5'- to 3'- or 3'- to 5'-direction to yield nucleoside 5'-phosphates.. Bidirectionally degrades single-stranded DNA into large acid-insoluble oligonucleotides, which are then degraded further into small acid-soluble oligonucleotides. The protein is Exodeoxyribonuclease 7 large subunit of Escherichia coli (strain SMS-3-5 / SECEC).